The chain runs to 281 residues: Pantothenate synthetase (281 aa).

An ATP-binding site is contributed by 30–37; sequence MGYLHEGH. Histidine 37 functions as the Proton donor in the catalytic mechanism. Glutamine 61 is a binding site for (R)-pantoate. Glutamine 61 contributes to the beta-alanine binding site. 147-150 lines the ATP pocket; the sequence is GEKD. Glutamine 153 is a binding site for (R)-pantoate. ATP-binding positions include isoleucine 176 and 184–187; that span reads KSSR.

Belongs to the pantothenate synthetase family. As to quaternary structure, homodimer.

It localises to the cytoplasm. It carries out the reaction (R)-pantoate + beta-alanine + ATP = (R)-pantothenate + AMP + diphosphate + H(+). It participates in cofactor biosynthesis; (R)-pantothenate biosynthesis; (R)-pantothenate from (R)-pantoate and beta-alanine: step 1/1. Functionally, catalyzes the condensation of pantoate with beta-alanine in an ATP-dependent reaction via a pantoyl-adenylate intermediate. The sequence is that of Pantothenate synthetase from Clostridium botulinum (strain 657 / Type Ba4).